The sequence spans 300 residues: Phospholipase A1 (300 aa).

C4 and C87 are oxidised to a cystine. The active-site Nucleophile is the S137. D165 acts as the Charge relay system in catalysis. 2 disulfides stabilise this stretch: C176-C181 and C219-C227. H229 (charge relay system) is an active-site residue. Cystine bridges form between C244-C268, C245-C293, and C261-C266.

This sequence belongs to the AB hydrolase superfamily. Lipase family. As to expression, expressed by the venom gland.

The protein localises to the secreted. The enzyme catalyses a 1,2-diacyl-sn-glycero-3-phosphocholine + H2O = a 2-acyl-sn-glycero-3-phosphocholine + a fatty acid + H(+). Catalyzes the hydrolysis of phosphatidylcholine with phospholipase A1 activity. May act as an allergen and induce hemolytic activity. The sequence is that of Phospholipase A1 from Vespula maculifrons (Eastern yellow jacket).